The following is a 526-amino-acid chain: Nitrogenase iron-iron protein alpha chain (526 aa).

Positions 49, 75, and 138 each coordinate [8Fe-7S] cluster. [8Fe-9S-C-homocitryl] cluster is bound by residues Cys-257 and His-423. The disordered stretch occupies residues 507 to 526; the sequence is RNQPMPPSRKLRDAVQPAAE.

It belongs to the NifD/NifK/NifE/NifN family. Hexamer of two alpha, two beta, and two delta chains. [8Fe-7S] cluster serves as cofactor. Requires [8Fe-9S-C-homocitryl] cluster as cofactor.

The catalysed reaction is N2 + 8 reduced [2Fe-2S]-[ferredoxin] + 16 ATP + 16 H2O = H2 + 8 oxidized [2Fe-2S]-[ferredoxin] + 2 NH4(+) + 16 ADP + 16 phosphate + 6 H(+). Its function is as follows. This iron-iron protein is part of the nitrogenase complex that catalyzes the key enzymatic reactions in nitrogen fixation. Other nitrogenase complexes utilize a molybdenum-iron protein or a vanadium-iron protein. The sequence is that of Nitrogenase iron-iron protein alpha chain (anfD) from Rhodobacter capsulatus (Rhodopseudomonas capsulata).